We begin with the raw amino-acid sequence, 286 residues long: Formamidopyrimidine-DNA glycosylase (286 aa).

Residue proline 2 is the Schiff-base intermediate with DNA of the active site. Glutamate 3 serves as the catalytic Proton donor. Catalysis depends on lysine 61, which acts as the Proton donor; for beta-elimination activity. DNA-binding residues include histidine 96, arginine 117, and lysine 160. The segment at 246-280 (DAYGREGLPCRRCATPMRRRPWMNRSSYFCPKCQR) adopts an FPG-type zinc-finger fold. Arginine 270 acts as the Proton donor; for delta-elimination activity in catalysis.

It belongs to the FPG family. As to quaternary structure, monomer. Zn(2+) serves as cofactor.

It catalyses the reaction Hydrolysis of DNA containing ring-opened 7-methylguanine residues, releasing 2,6-diamino-4-hydroxy-5-(N-methyl)formamidopyrimidine.. The catalysed reaction is 2'-deoxyribonucleotide-(2'-deoxyribose 5'-phosphate)-2'-deoxyribonucleotide-DNA = a 3'-end 2'-deoxyribonucleotide-(2,3-dehydro-2,3-deoxyribose 5'-phosphate)-DNA + a 5'-end 5'-phospho-2'-deoxyribonucleoside-DNA + H(+). Functionally, involved in base excision repair of DNA damaged by oxidation or by mutagenic agents. Acts as a DNA glycosylase that recognizes and removes damaged bases. Has a preference for oxidized purines, such as 7,8-dihydro-8-oxoguanine (8-oxoG). Has AP (apurinic/apyrimidinic) lyase activity and introduces nicks in the DNA strand. Cleaves the DNA backbone by beta-delta elimination to generate a single-strand break at the site of the removed base with both 3'- and 5'-phosphates. In Streptomyces avermitilis (strain ATCC 31267 / DSM 46492 / JCM 5070 / NBRC 14893 / NCIMB 12804 / NRRL 8165 / MA-4680), this protein is Formamidopyrimidine-DNA glycosylase.